The following is a 295-amino-acid chain: Phosphoribosylaminoimidazole-succinocarboxamide synthase (295 aa).

It belongs to the SAICAR synthetase family.

The catalysed reaction is 5-amino-1-(5-phospho-D-ribosyl)imidazole-4-carboxylate + L-aspartate + ATP = (2S)-2-[5-amino-1-(5-phospho-beta-D-ribosyl)imidazole-4-carboxamido]succinate + ADP + phosphate + 2 H(+). Its pathway is purine metabolism; IMP biosynthesis via de novo pathway; 5-amino-1-(5-phospho-D-ribosyl)imidazole-4-carboxamide from 5-amino-1-(5-phospho-D-ribosyl)imidazole-4-carboxylate: step 1/2. This is Phosphoribosylaminoimidazole-succinocarboxamide synthase from Desulforapulum autotrophicum (strain ATCC 43914 / DSM 3382 / VKM B-1955 / HRM2) (Desulfobacterium autotrophicum).